Reading from the N-terminus, the 591-residue chain is Reduced folate transporter (591 aa).

Position 1 is an N-acetylmethionine (M1). The Cytoplasmic segment spans residues 1-29 (MVPSSPAVEKQVPVEPGPDPELRSWRHLV). Residue S5 is modified to Phosphoserine. Residues 30–50 (CYLCFYGFMAQIRPGESFITP) form a helical membrane-spanning segment. Folate-binding residues include I48 and T49. The Extracellular segment spans residues 51–64 (YLLGPDKNFTREQV). An N-linked (GlcNAc...) asparagine glycan is attached at N58. Residues 65-87 (TNEITPVLSYSYLAVLVPVFLLT) form a helical membrane-spanning segment. Over 88–91 (DYLR) the chain is Cytoplasmic. Residues 92 to 112 (YTPVLLLQGLSFVSVWLLLLL) form a helical membrane-spanning segment. Residues 113-116 (GHSV) are Extracellular-facing. Residues 117–139 (AHMQLMELFYSVTMAARIAYSSY) traverse the membrane as a helical segment. Folate-binding residues include E123 and R133. R133, I134, S137, Y149, and R157 together coordinate 2',3'-cGAMP. Topologically, residues 140–153 (IFSLVRPARYQRVA) are cytoplasmic. A helical transmembrane segment spans residues 154–178 (GYSRAAVLLGVFTSSVLGQLLVTVG). A folate-binding site is contributed by V164. Over 179–183 (RVSFS) the chain is Extracellular. Residues 184-202 (TLNYISLAFLTFSVVLALF) form a helical membrane-spanning segment. The Cytoplasmic portion of the chain corresponds to 203–266 (LKRPKRSLFF…ELGDSLRRPQ (64 aa)). A Phosphoserine modification is found at S225. The chain crosses the membrane as a helical span at residues 267-292 (LRLWSLWWVFNSAGYYLVVYYVHILW). 3 residues coordinate folate: Y281, Y282, and Y286. Position 282 (Y282) interacts with 2',3'-cGAMP. At 293–304 (NEVDPTTNSARV) the chain is on the extracellular side. The chain crosses the membrane as a helical span at residues 305–327 (YNGAADAASTLLGAITSFAAGFV). S321 serves as a coordination point for 2',3'-cGAMP. Residues 328 to 333 (KIRWAR) lie on the Cytoplasmic side of the membrane. Residues 334–354 (WSKLLIAGVTATQAGLVFLLA) form a helical membrane-spanning segment. Topologically, residues 355 to 360 (HTRHPS) are extracellular. Residues 361-384 (SIWLCYAAFVLFRGSYQFLVPIAT) traverse the membrane as a helical segment. Folate contacts are provided by R373 and Q377. Residues Q377, P381, T384, K393, C396, and F400 each contribute to the 2',3'-cGAMP site. Residues 385–398 (FQIASSLSKELCAL) are Cytoplasmic-facing. A helical transmembrane segment spans residues 399–422 (VFGVNTFFATIVKTIITFIVSDVR). The segment at 407 to 419 (ATIVKTIITFIVS) is required for substrate-binding. Over 423–430 (GLGLPVRK) the chain is Extracellular. A helical membrane pass occupies residues 431-455 (QFQLYSVYFLILSIIYFLGAMLDGL). The Cytoplasmic segment spans residues 456-591 (RHCQRGHHPR…PSDGVQNVNQ (136 aa)). Phosphoserine is present on residues S474, S485, S499, and S503.

It belongs to the reduced folate carrier (RFC) transporter (TC 2.A.48) family. In terms of tissue distribution, placenta, liver, and to a much smaller extent, in lung.

It localises to the cell membrane. Its subcellular location is the apical cell membrane. The protein localises to the basolateral cell membrane. The catalysed reaction is 5-amino-1-(5-phospho-beta-D-ribosyl)imidazole-4-carboxamide(in) + (6S)-5-methyl-5,6,7,8-tetrahydrofolate(out) = 5-amino-1-(5-phospho-beta-D-ribosyl)imidazole-4-carboxamide(out) + (6S)-5-methyl-5,6,7,8-tetrahydrofolate(in). It carries out the reaction 2',3'-cGAMP(out) + 5-amino-1-(5-phospho-beta-D-ribosyl)imidazole-4-carboxamide(in) = 2',3'-cGAMP(in) + 5-amino-1-(5-phospho-beta-D-ribosyl)imidazole-4-carboxamide(out). It catalyses the reaction 3',3'-cGAMP(out) + 5-amino-1-(5-phospho-beta-D-ribosyl)imidazole-4-carboxamide(in) = 3',3'-cGAMP(in) + 5-amino-1-(5-phospho-beta-D-ribosyl)imidazole-4-carboxamide(out). Its function is as follows. Antiporter that mediates the import of reduced folates or a subset of cyclic dinucleotides, driven by the export of organic anions. Acts as an importer of immunoreactive cyclic dinucleotides, such as cyclic GMP-AMP (2'-3'-cGAMP), an immune messenger produced in response to DNA virus in the cytosol, and its linkage isomer 3'-3'-cGAMP, thus playing a role in triggering larger immune responses. Mechanistically, acts as a secondary active transporter, which exports intracellular organic anions down their concentration gradients to facilitate the uptake of its substrates. Has high affinity for N5-methyltetrahydrofolate, the predominant circulating form of folate. Also mediates the import of antifolate drug methotrexate. 5-amino-4-imidazolecarboxamide riboside (AICAR), when phosphorylated to AICAR monophosphate, can serve as an organic anion for antiporter activity. In Homo sapiens (Human), this protein is Reduced folate transporter.